The primary structure comprises 98 residues: Cell division topological specificity factor (98 aa).

It belongs to the MinE family.

Prevents the cell division inhibition by proteins MinC and MinD at internal division sites while permitting inhibition at polar sites. This ensures cell division at the proper site by restricting the formation of a division septum at the midpoint of the long axis of the cell. The protein is Cell division topological specificity factor of Methylorubrum populi (strain ATCC BAA-705 / NCIMB 13946 / BJ001) (Methylobacterium populi).